We begin with the raw amino-acid sequence, 191 residues long: Glutathione-dependent formaldehyde-activating enzyme (191 aa).

Residues 22–169 (FAGGTLQCLC…LTELGLTPYD (148 aa)) form the CENP-V/GFA domain. Residues Cys-29, Cys-31, Cys-50, Cys-52, Cys-55, Cys-97, and Cys-100 each coordinate Zn(2+).

Belongs to the Gfa family. Zn(2+) serves as cofactor.

It catalyses the reaction S-(hydroxymethyl)glutathione = glutathione + formaldehyde. The protein operates within one-carbon metabolism; formaldehyde degradation; formate from formaldehyde (glutathione route): step 1/3. Functionally, catalyzes the condensation of formaldehyde and glutathione to S-hydroxymethylglutathione. The sequence is that of Glutathione-dependent formaldehyde-activating enzyme from Xanthomonas campestris pv. campestris (strain B100).